A 516-amino-acid polypeptide reads, in one-letter code: Lysine--tRNA ligase (516 aa).

Residues 1–23 (MTEPNRAQAAPASPTAELPAADE) are disordered. Mg(2+) contacts are provided by Glu-426 and Glu-433.

This sequence belongs to the class-II aminoacyl-tRNA synthetase family. Homodimer. It depends on Mg(2+) as a cofactor.

The protein resides in the cytoplasm. The enzyme catalyses tRNA(Lys) + L-lysine + ATP = L-lysyl-tRNA(Lys) + AMP + diphosphate. The chain is Lysine--tRNA ligase from Cupriavidus pinatubonensis (strain JMP 134 / LMG 1197) (Cupriavidus necator (strain JMP 134)).